Consider the following 629-residue polypeptide: Pescadillo homolog (629 aa).

The 94-residue stretch at 321–414 (RLRTLFKGLK…QLLPTNKYFI (94 aa)) folds into the BRCT domain. Disordered regions lie at residues 439–470 (KALL…ETVD), 488–568 (EYKK…MVKP), and 598–629 (IEAS…KLGK). Serine 453 and serine 457 each carry phosphoserine. Composition is skewed to acidic residues over residues 454-470 (DEDS…ETVD) and 498-523 (VNED…EELD). Residues 524–535 (EKSKRLQEEKQK) show a composition bias toward basic and acidic residues. A compositionally biased stretch (basic residues) spans 542-551 (KVHKVNKRQV). Composition is skewed to basic and acidic residues over residues 552-561 (HKAEVDEHRL) and 598-617 (IEAS…RKEA). Positions 584–627 (KEKEEWLLRKKRRTIEASEKEARKTAKREARKEAAAAAAKASKL) form a coiled coil. Residues 618-629 (AAAAAKASKLGK) show a composition bias toward low complexity.

It belongs to the pescadillo family.

The protein resides in the nucleus. Its subcellular location is the nucleolus. The protein localises to the nucleoplasm. Required for maturation of ribosomal RNAs and formation of the large ribosomal subunit. The protein is Pescadillo homolog of Drosophila erecta (Fruit fly).